The chain runs to 501 residues: Lysine--tRNA ligase (501 aa).

2 residues coordinate Mg(2+): Asp411 and Glu418.

The protein belongs to the class-II aminoacyl-tRNA synthetase family. As to quaternary structure, homodimer. It depends on Mg(2+) as a cofactor.

Its subcellular location is the cytoplasm. It catalyses the reaction tRNA(Lys) + L-lysine + ATP = L-lysyl-tRNA(Lys) + AMP + diphosphate. The chain is Lysine--tRNA ligase from Mycolicibacterium gilvum (strain PYR-GCK) (Mycobacterium gilvum (strain PYR-GCK)).